A 347-amino-acid polypeptide reads, in one-letter code: 4-hydroxy-3-methylbut-2-en-1-yl diphosphate synthase (flavodoxin) (347 aa).

Positions 259, 262, 294, and 301 each coordinate [4Fe-4S] cluster.

This sequence belongs to the IspG family. It depends on [4Fe-4S] cluster as a cofactor.

It carries out the reaction (2E)-4-hydroxy-3-methylbut-2-enyl diphosphate + oxidized [flavodoxin] + H2O + 2 H(+) = 2-C-methyl-D-erythritol 2,4-cyclic diphosphate + reduced [flavodoxin]. Its pathway is isoprenoid biosynthesis; isopentenyl diphosphate biosynthesis via DXP pathway; isopentenyl diphosphate from 1-deoxy-D-xylulose 5-phosphate: step 5/6. In terms of biological role, converts 2C-methyl-D-erythritol 2,4-cyclodiphosphate (ME-2,4cPP) into 1-hydroxy-2-methyl-2-(E)-butenyl 4-diphosphate. The sequence is that of 4-hydroxy-3-methylbut-2-en-1-yl diphosphate synthase (flavodoxin) from Caldicellulosiruptor saccharolyticus (strain ATCC 43494 / DSM 8903 / Tp8T 6331).